The sequence spans 377 residues: Ribosomal RNA large subunit methyltransferase G (377 aa).

Belongs to the methyltransferase superfamily. RlmG family.

Its subcellular location is the cytoplasm. It carries out the reaction guanosine(1835) in 23S rRNA + S-adenosyl-L-methionine = N(2)-methylguanosine(1835) in 23S rRNA + S-adenosyl-L-homocysteine + H(+). Specifically methylates the guanine in position 1835 (m2G1835) of 23S rRNA. This is Ribosomal RNA large subunit methyltransferase G from Shewanella sp. (strain MR-4).